A 255-amino-acid chain; its full sequence is Probable transcriptional regulatory protein CMM_1817 (255 aa).

It belongs to the TACO1 family.

It is found in the cytoplasm. The chain is Probable transcriptional regulatory protein CMM_1817 from Clavibacter michiganensis subsp. michiganensis (strain NCPPB 382).